The primary structure comprises 270 residues: UPF0354 protein BcerKBAB4_4524 (270 aa).

This sequence belongs to the UPF0354 family.

This Bacillus mycoides (strain KBAB4) (Bacillus weihenstephanensis) protein is UPF0354 protein BcerKBAB4_4524.